Consider the following 213-residue polypeptide: Uridine kinase (213 aa).

Position 15-22 (15-22) interacts with ATP; it reads GGSGSGKT.

Belongs to the uridine kinase family.

The protein resides in the cytoplasm. It carries out the reaction uridine + ATP = UMP + ADP + H(+). The enzyme catalyses cytidine + ATP = CMP + ADP + H(+). The protein operates within pyrimidine metabolism; CTP biosynthesis via salvage pathway; CTP from cytidine: step 1/3. It functions in the pathway pyrimidine metabolism; UMP biosynthesis via salvage pathway; UMP from uridine: step 1/1. The polypeptide is Uridine kinase (Ligilactobacillus salivarius (strain UCC118) (Lactobacillus salivarius)).